Reading from the N-terminus, the 464-residue chain is FERM domain-containing protein 8 (464 aa).

Met1 carries the post-translational modification N-acetylmethionine. The disordered stretch occupies residues 1–22; it reads MDGTEGSAGQPGPAERSHRSSV. Position 24 is a phosphoserine (Ser24). The FERM domain maps to 30–376; that stretch reads ADVLVYLADD…YCIELSQAAE (347 aa). The disordered stretch occupies residues 376-408; it reads EPAGPQDSATGSPSDPSSSLAPVQRPKLRRQGS. A phosphoserine mark is found at Ser383, Ser387, and Ser408. Phosphothreonine is present on Thr419. Ser439 and Ser446 each carry phosphoserine.

As to quaternary structure, interacts with iRhom1/RHBDF1 and iRhom2/RHBDF2 (via cytoplasmic N-termini); this interaction leads to mutual protein stabilization. Interacts with ADAM17; this interaction is indirect and mediated by iRhom proteins. Interacts with LRP6; this interaction affects LRP6-binding to AXIN1. In terms of tissue distribution, widely expressed, with high expression in heart and spleen.

The protein resides in the cytoplasm. Its subcellular location is the cytosol. It is found in the cell membrane. Its function is as follows. Promotes the cell surface stability of iRhom1/RHBDF1 and iRhom2/RHBDF2 and prevents their degradation via the endolysosomal pathway. By acting on iRhoms, involved in ADAM17-mediated shedding of TNF, amphiregulin/AREG, HBEGF and TGFA from the cell surface. Negatively regulates Wnt signaling, possibly by antagonizing the recruitment of AXIN1 to LRP6. The sequence is that of FERM domain-containing protein 8 (FRMD8) from Homo sapiens (Human).